The primary structure comprises 352 residues: Protein RecA (352 aa).

Glycine 67–threonine 74 serves as a coordination point for ATP.

The protein belongs to the RecA family.

Its subcellular location is the cytoplasm. In terms of biological role, can catalyze the hydrolysis of ATP in the presence of single-stranded DNA, the ATP-dependent uptake of single-stranded DNA by duplex DNA, and the ATP-dependent hybridization of homologous single-stranded DNAs. It interacts with LexA causing its activation and leading to its autocatalytic cleavage. The sequence is that of Protein RecA from Klebsiella pneumoniae subsp. pneumoniae (strain ATCC 700721 / MGH 78578).